Reading from the N-terminus, the 484-residue chain is UDP-N-acetylmuramate--L-alanine ligase (484 aa).

127–133 (GTHGKTT) contributes to the ATP binding site.

The protein belongs to the MurCDEF family.

Its subcellular location is the cytoplasm. The enzyme catalyses UDP-N-acetyl-alpha-D-muramate + L-alanine + ATP = UDP-N-acetyl-alpha-D-muramoyl-L-alanine + ADP + phosphate + H(+). It participates in cell wall biogenesis; peptidoglycan biosynthesis. In terms of biological role, cell wall formation. The protein is UDP-N-acetylmuramate--L-alanine ligase of Shewanella amazonensis (strain ATCC BAA-1098 / SB2B).